We begin with the raw amino-acid sequence, 261 residues long: Carnitinyl-CoA dehydratase (261 aa).

Residue E111 is the Nucleophile of the active site. Residue E131 is the Proton acceptor of the active site.

The protein belongs to the enoyl-CoA hydratase/isomerase family.

The enzyme catalyses (R)-carnitinyl-CoA = crotonobetainyl-CoA + H2O. The protein operates within amine and polyamine metabolism; carnitine metabolism. In terms of biological role, catalyzes the reversible dehydration of L-carnitinyl-CoA to crotonobetainyl-CoA. The protein is Carnitinyl-CoA dehydratase of Shigella flexneri.